We begin with the raw amino-acid sequence, 205 residues long: Metal-independent carbonic anhydrase (205 aa).

A signal peptide spans 1–24 (MNLFKPRILVLFAATALISGIAIV). Residues Thr106 and Tyr124 each coordinate hydrogencarbonate.

The protein belongs to the iota-class carbonic anhydrase family. As to quaternary structure, homotetramer; dimer of dimers. The cofactor is Does not require a metal cofactor..

The catalysed reaction is hydrogencarbonate + H(+) = CO2 + H2O. Its activity is regulated as follows. Activity is not affected by EDTA or 2,6-pyridinedicarboxylic acid (PDA). Activity is not affected by addition of most divalent metal ions, except zinc ions which decrease the activity. Inhibited by the iodide ion. Catalyzes the hydration of carbon dioxide (CO2) to bicarbonate (HCO3(-)). Has only very low bicarbonate dehydration activity. May function even in metal-poor environments. This Nostoc sp. (strain PCC 7120 / SAG 25.82 / UTEX 2576) protein is Metal-independent carbonic anhydrase.